Consider the following 342-residue polypeptide: S-adenosylmethionine:tRNA ribosyltransferase-isomerase (342 aa).

Belongs to the QueA family. Monomer.

It localises to the cytoplasm. It carries out the reaction 7-aminomethyl-7-carbaguanosine(34) in tRNA + S-adenosyl-L-methionine = epoxyqueuosine(34) in tRNA + adenine + L-methionine + 2 H(+). It functions in the pathway tRNA modification; tRNA-queuosine biosynthesis. Transfers and isomerizes the ribose moiety from AdoMet to the 7-aminomethyl group of 7-deazaguanine (preQ1-tRNA) to give epoxyqueuosine (oQ-tRNA). The protein is S-adenosylmethionine:tRNA ribosyltransferase-isomerase of Novosphingobium aromaticivorans (strain ATCC 700278 / DSM 12444 / CCUG 56034 / CIP 105152 / NBRC 16084 / F199).